The chain runs to 268 residues: Hydroxyacylglutathione hydrolase (268 aa).

7 residues coordinate Zn(2+): histidine 56, histidine 58, aspartate 60, histidine 61, histidine 112, aspartate 137, and histidine 176. Residue 176 to 178 (HEY) coordinates substrate.

Belongs to the metallo-beta-lactamase superfamily. Glyoxalase II family. As to quaternary structure, monomer. Requires Zn(2+) as cofactor.

It carries out the reaction an S-(2-hydroxyacyl)glutathione + H2O = a 2-hydroxy carboxylate + glutathione + H(+). Its pathway is secondary metabolite metabolism; methylglyoxal degradation; (R)-lactate from methylglyoxal: step 2/2. Its function is as follows. Thiolesterase that catalyzes the hydrolysis of S-D-lactoyl-glutathione to form glutathione and D-lactic acid. This chain is Hydroxyacylglutathione hydrolase (hagh), found in Dictyostelium discoideum (Social amoeba).